Reading from the N-terminus, the 363-residue chain is Homeobox protein DTH-2 (363 aa).

A DNA-binding region (homeobox) is located at residues 133-192 (RRKRRILFSQAQIYELERRFKQQKYLSAPEREHLANLINLTPTQVKIWFQNHRYKCKRSQ). The interval 189 to 246 (KRSQKDKEKEQQKEKSYHLKKNIVDDKERSPNKQICNASSSDRSTPEEPVAKAKESGL) is disordered. The span at 191-219 (SQKDKEKEQQKEKSYHLKKNIVDDKERSP) shows a compositional bias: basic and acidic residues. The span at 220–231 (NKQICNASSSDR) shows a compositional bias: polar residues. A compositionally biased stretch (basic and acidic residues) spans 232–246 (STPEEPVAKAKESGL).

Belongs to the NK-2 homeobox family. Intestine and unidentified peripheral parenchymal cells. Slightly higher levels in the cephalic region compared to other body regions.

It is found in the nucleus. This protein might be involved in determination and/or differentiation of nerve cells in the continuous replacement of neurons in the cephalic region. This chain is Homeobox protein DTH-2 (DTH-2), found in Girardia tigrina (Planarian).